Consider the following 196-residue polypeptide: Nucleoid occlusion factor SlmA (196 aa).

Residues 7–68 enclose the HTH tetR-type domain; the sequence is PNRRDEILQA…GLIEFIEESI (62 aa). The H-T-H motif DNA-binding region spans 31-50; the sequence is TTAKLAKQVGVSEAALYRHF. The stretch at 71-93 forms a coiled coil; sequence RVNRILEDEKDTLKRIELLLKLL.

The protein belongs to the nucleoid occlusion factor SlmA family. In terms of assembly, homodimer. Interacts with FtsZ.

It localises to the cytoplasm. Its subcellular location is the nucleoid. Its function is as follows. Required for nucleoid occlusion (NO) phenomenon, which prevents Z-ring formation and cell division over the nucleoid. Acts as a DNA-associated cell division inhibitor that binds simultaneously chromosomal DNA and FtsZ, and disrupts the assembly of FtsZ polymers. SlmA-DNA-binding sequences (SBS) are dispersed on non-Ter regions of the chromosome, preventing FtsZ polymerization at these regions. The polypeptide is Nucleoid occlusion factor SlmA (Aliivibrio fischeri (strain MJ11) (Vibrio fischeri)).